A 278-amino-acid chain; its full sequence is Tryptophan 2,3-dioxygenase (278 aa).

Substrate-binding positions include 47-51 (FIIQH), Tyr110, and Arg114. His236 serves as a coordination point for heme. Residue Thr250 coordinates substrate.

This sequence belongs to the tryptophan 2,3-dioxygenase family. As to quaternary structure, homotetramer. Heme is required as a cofactor.

It catalyses the reaction L-tryptophan + O2 = N-formyl-L-kynurenine. Its pathway is amino-acid degradation; L-tryptophan degradation via kynurenine pathway; L-kynurenine from L-tryptophan: step 1/2. Heme-dependent dioxygenase that catalyzes the oxidative cleavage of the L-tryptophan (L-Trp) pyrrole ring and converts L-tryptophan to N-formyl-L-kynurenine. Catalyzes the oxidative cleavage of the indole moiety. This Ruegeria pomeroyi (strain ATCC 700808 / DSM 15171 / DSS-3) (Silicibacter pomeroyi) protein is Tryptophan 2,3-dioxygenase.